A 228-amino-acid polypeptide reads, in one-letter code: UPF0758 protein STER_1430 (228 aa).

The region spanning 103–225 is the MPN domain; the sequence is QIMSSQQVAR…YYSFREERED (123 aa). Positions 174, 176, and 187 each coordinate Zn(2+). A JAMM motif motif is present at residues 174–187; that stretch reads HNHPSGEAYPSRND.

Belongs to the UPF0758 family.

This Streptococcus thermophilus (strain ATCC BAA-491 / LMD-9) protein is UPF0758 protein STER_1430.